The sequence spans 365 residues: Peptide chain release factor 2 (365 aa).

At Gln-249 the chain carries N5-methylglutamine.

It belongs to the prokaryotic/mitochondrial release factor family. Post-translationally, methylated by PrmC. Methylation increases the termination efficiency of RF2.

It localises to the cytoplasm. Functionally, peptide chain release factor 2 directs the termination of translation in response to the peptide chain termination codons UGA and UAA. This chain is Peptide chain release factor 2, found in Acholeplasma laidlawii (strain PG-8A).